The following is a 432-amino-acid chain: Trigger factor (432 aa).

Residues 161–246 (EDRVTIDFTG…LKKVEERELP (86 aa)) enclose the PPIase FKBP-type domain.

This sequence belongs to the FKBP-type PPIase family. Tig subfamily. Homodimer and monomer. In vivo most of the ribosomes are in complex with monomeric TF. Uncomplexed TF, however, is in a monomer-dimer equilibrium with approximately two thirds of TF existing in a dimeric state.

It localises to the cytoplasm. The enzyme catalyses [protein]-peptidylproline (omega=180) = [protein]-peptidylproline (omega=0). Its function is as follows. Involved in protein export. Acts as a chaperone by maintaining the newly synthesized protein in an open conformation. Functions as a peptidyl-prolyl cis-trans isomerase. This Escherichia coli O6:K15:H31 (strain 536 / UPEC) protein is Trigger factor.